Here is a 336-residue protein sequence, read N- to C-terminus: Holliday junction branch migration complex subunit RuvB (336 aa).

Residues 1–11 (MDDDKLLSGDK) show a composition bias toward basic and acidic residues. Positions 1–21 (MDDDKLLSGDKADDEEASLEK) are disordered. Positions 1–184 (MDDDKLLSGD…FGIVEHMAYY (184 aa)) are large ATPase domain (RuvB-L). ATP contacts are provided by residues Leu-23, Arg-24, Gly-65, Lys-68, Thr-69, Thr-70, 131–133 (EDF), Arg-174, Tyr-184, and Arg-221. Thr-69 is a Mg(2+) binding site. Positions 185 to 255 (EVADLEDIVK…IVARSLTYLR (71 aa)) are small ATPAse domain (RuvB-S). Residues 258-336 (DAGLDETDNK…HLGFPYPENK (79 aa)) are head domain (RuvB-H). DNA contacts are provided by Arg-313 and Arg-318.

It belongs to the RuvB family. Homohexamer. Forms an RuvA(8)-RuvB(12)-Holliday junction (HJ) complex. HJ DNA is sandwiched between 2 RuvA tetramers; dsDNA enters through RuvA and exits via RuvB. An RuvB hexamer assembles on each DNA strand where it exits the tetramer. Each RuvB hexamer is contacted by two RuvA subunits (via domain III) on 2 adjacent RuvB subunits; this complex drives branch migration. In the full resolvosome a probable DNA-RuvA(4)-RuvB(12)-RuvC(2) complex forms which resolves the HJ.

It localises to the cytoplasm. It carries out the reaction ATP + H2O = ADP + phosphate + H(+). Functionally, the RuvA-RuvB-RuvC complex processes Holliday junction (HJ) DNA during genetic recombination and DNA repair, while the RuvA-RuvB complex plays an important role in the rescue of blocked DNA replication forks via replication fork reversal (RFR). RuvA specifically binds to HJ cruciform DNA, conferring on it an open structure. The RuvB hexamer acts as an ATP-dependent pump, pulling dsDNA into and through the RuvAB complex. RuvB forms 2 homohexamers on either side of HJ DNA bound by 1 or 2 RuvA tetramers; 4 subunits per hexamer contact DNA at a time. Coordinated motions by a converter formed by DNA-disengaged RuvB subunits stimulates ATP hydrolysis and nucleotide exchange. Immobilization of the converter enables RuvB to convert the ATP-contained energy into a lever motion, pulling 2 nucleotides of DNA out of the RuvA tetramer per ATP hydrolyzed, thus driving DNA branch migration. The RuvB motors rotate together with the DNA substrate, which together with the progressing nucleotide cycle form the mechanistic basis for DNA recombination by continuous HJ branch migration. Branch migration allows RuvC to scan DNA until it finds its consensus sequence, where it cleaves and resolves cruciform DNA. This chain is Holliday junction branch migration complex subunit RuvB, found in Lactiplantibacillus plantarum (strain ATCC BAA-793 / NCIMB 8826 / WCFS1) (Lactobacillus plantarum).